The following is a 318-amino-acid chain: Leucine-rich repeat domain-containing protein YddK (318 aa).

9 LRR repeats span residues N109–D129, R130–N151, S153–S173, S174–E194, W195–E216, L217–N237, L238–F258, N260–T280, and S284–D305.

This is Leucine-rich repeat domain-containing protein YddK (yddK) from Escherichia coli (strain K12).